A 247-amino-acid polypeptide reads, in one-letter code: Proteasome subunit alpha (247 aa).

It belongs to the peptidase T1A family. The 20S proteasome core is composed of 14 alpha and 14 beta subunits that assemble into four stacked heptameric rings, resulting in a barrel-shaped structure. The two inner rings, each composed of seven catalytic beta subunits, are sandwiched by two outer rings, each composed of seven alpha subunits. The catalytic chamber with the active sites is on the inside of the barrel. Has a gated structure, the ends of the cylinder being occluded by the N-termini of the alpha-subunits. Is capped at one or both ends by the proteasome regulatory ATPase, PAN.

The protein localises to the cytoplasm. With respect to regulation, the formation of the proteasomal ATPase PAN-20S proteasome complex, via the docking of the C-termini of PAN into the intersubunit pockets in the alpha-rings, triggers opening of the gate for substrate entry. Interconversion between the open-gate and close-gate conformations leads to a dynamic regulation of the 20S proteasome proteolysis activity. In terms of biological role, component of the proteasome core, a large protease complex with broad specificity involved in protein degradation. This is Proteasome subunit alpha from Methanosarcina acetivorans (strain ATCC 35395 / DSM 2834 / JCM 12185 / C2A).